The primary structure comprises 246 residues: MTQPKILVLIPARMASTRLPGKPLLDIAGLPMIVQVLRRAQEANIGRVAVATDTKEIADAVIAHGGEAVMTRPDHPSGSDRIYEASCKLDPAGEAEIVVNLQGDFPTILPQNIRDVLLPLSDPAVDIATLAAQIHTAEEDAAPSVVKAVGSPIGERRLRALYFTRATAPHGDGPRYHHIGLYAYRRAALERFVSLPPSPLELQEKLEQLRALEAGMRIDIGIVDTVPRGVDTPPDLETARRLLSKA.

Belongs to the KdsB family.

The protein resides in the cytoplasm. It carries out the reaction 3-deoxy-alpha-D-manno-oct-2-ulosonate + CTP = CMP-3-deoxy-beta-D-manno-octulosonate + diphosphate. It participates in nucleotide-sugar biosynthesis; CMP-3-deoxy-D-manno-octulosonate biosynthesis; CMP-3-deoxy-D-manno-octulosonate from 3-deoxy-D-manno-octulosonate and CTP: step 1/1. It functions in the pathway bacterial outer membrane biogenesis; lipopolysaccharide biosynthesis. Functionally, activates KDO (a required 8-carbon sugar) for incorporation into bacterial lipopolysaccharide in Gram-negative bacteria. The protein is 3-deoxy-manno-octulosonate cytidylyltransferase of Bradyrhizobium sp. (strain BTAi1 / ATCC BAA-1182).